We begin with the raw amino-acid sequence, 1231 residues long: Complement factor H (1231 aa).

The signal sequence occupies residues 1–18; the sequence is MRLLAKIICLMLWAICVA. Sushi domains lie at 19-82, 83-143, 144-207, 208-264, 265-322, 324-386, 387-444, 446-507, 515-566, 567-625, 628-686, 689-746, 751-805, 809-866, 868-928, 929-986, 987-1045, 1046-1104, 1107-1165, and 1170-1230; these read EDCN…KCQK, RPCG…ICEV, VKCL…KCVE, ISCK…SCEE, KSCD…RCTL, PCDY…VPCL, RKCY…RCIR, KTCS…TCIK, MNAR…ICYE, RECE…ICKE, QSCG…VCIV, STCG…QCVA, KKCK…NCSM, QLCP…LCVE, IPCS…QCEG, LPCK…SCIK, TDCL…TCRD, TSCV…QCKD, GKCG…KCLH, and SREI…TCAK. Cystine bridges form between Cys-21/Cys-66, Cys-52/Cys-80, Cys-85/Cys-129, Cys-114/Cys-141, Cys-146/Cys-192, Cys-178/Cys-205, Cys-210/Cys-251, Cys-237/Cys-262, Cys-267/Cys-309, Cys-294/Cys-320, Cys-325/Cys-374, Cys-357/Cys-385, Cys-389/Cys-431, Cys-416/Cys-442, Cys-448/Cys-494, Cys-477/Cys-505, Cys-509/Cys-553, Cys-536/Cys-564, Cys-569/Cys-611, Cys-597/Cys-623, Cys-630/Cys-673, Cys-659/Cys-684, Cys-691/Cys-733, Cys-719/Cys-744, Cys-753/Cys-792, Cys-781/Cys-803, Cys-811/Cys-853, Cys-839/Cys-864, Cys-870/Cys-915, Cys-901/Cys-926, Cys-931/Cys-973, Cys-959/Cys-984, Cys-989/Cys-1032, Cys-1018/Cys-1043, Cys-1048/Cys-1091, Cys-1077/Cys-1102, Cys-1109/Cys-1152, Cys-1138/Cys-1163, Cys-1167/Cys-1218, and Cys-1201/Cys-1228. Asn-217 carries an N-linked (GlcNAc...) (complex) asparagine glycan. Residue Asn-529 is glycosylated (N-linked (GlcNAc...) asparagine). Asn-718 carries an N-linked (GlcNAc...) asparagine glycan. Residues Asn-802 and Asn-822 are each glycosylated (N-linked (GlcNAc...) asparagine). N-linked (GlcNAc...) (complex) asparagine glycosylation is found at Asn-882 and Asn-911. A glycan (N-linked (GlcNAc...) (complex) asparagine) is linked at Asn-1029. Asn-1095 is a glycosylation site (N-linked (GlcNAc...) asparagine).

As to quaternary structure, homodimer. Also forms homooligomers. Interacts with complement protein C3b; this interaction inhibits complement activation. Interacts with complement protein C3d. Interacts with CR3/ITGAM; this interaction mediates adhesion of neutrophils to pathogens leading to pathogen clearance. Interacts with complement factor I. (Microbial infection) Interacts with West nile virus non-structural protein 1 (NS1); this interaction leads to the degradation of C3. In terms of assembly, (Microbial infection) Interacts with C.albicans GPD2; the interaction is direct and leads to the degradation of C3 which enables the pathogen to evade the host innate immune system. As to quaternary structure, (Microbial infection) Interacts with Neisseria meningitidis protein fHbp. (Microbial infection) Interacts with Borrelia burgdorferi outer surface protein E/OspE; this interaction recruits complement regulator factor H onto the bacterial surface to evade complement-mediated cell lysis. In terms of assembly, (Microbial infection) Interacts with Streptococcus pneumoniae protein virulence factor choline-binding protein A/CbpAN; this interaction enables Streptococcus pneumoniae to evade surveillance by human complement system. As to quaternary structure, (Microbial infection) Interacts with Staphylococcus aureus surface protein serine-aspartate repeat protein E/SdrE; this interaction sequesters CFH on the surface of S.aureus for complement evasion. (Microbial infection) Interacts with Staphylococcus aureus protein Sbi; this interaction inhibits the complement activation of the alternative pathway. In terms of assembly, (Microbial infection) Interacts (via sushi 4-6 domains) with P.falciparum surface protein PF92; the interaction recruits CFH onto the merozoite surface preventing complement-mediated cell lysis. The interaction does not affect CFH activity. Interacts (via sushi 6-7 domains) with P.falciparum (strain NF54) GAP50; the interaction occurs in the vector mosquito midgut at the surface of the activated parasite gametocytes; the interaction protects the parasite from alternative complement pathway-mediated elimination. As to quaternary structure, (Microbial infection) Interacts (via sushi 4-6 domains) with P.falciparum surface protein PF92; the interaction recruits FHL-1 isoform onto the merozoite surface preventing complement-mediated cell lysis. The interaction does not affect FHL-1 isoform activity. Interacts (via sushi 6-7 domains) with P.falciparum (strain NF54) GAP50; the interaction occurs in the vector mosquito midgut at the surface of the activated parasite gametocytes; the interaction protects the parasite from alternative complement pathway-mediated elimination. Post-translationally, sulfated on tyrosine residues. According to a report, Asn-217 is not glycosylated. Another study observed glycosylation at this position. In terms of tissue distribution, expressed in the retinal pigment epithelium (at protein level). CFH is one of the most abundant complement components in blood where the liver is the major source of CFH protein in vivo. in addition, CFH is secreted by additional cell types including monocytes, fibroblasts, or endothelial cells.

The protein resides in the secreted. In terms of biological role, glycoprotein that plays an essential role in maintaining a well-balanced immune response by modulating complement activation. Acts as a soluble inhibitor of complement, where its binding to self markers such as glycan structures prevents complement activation and amplification on cell surfaces. Accelerates the decay of the complement alternative pathway (AP) C3 convertase C3bBb, thus preventing local formation of more C3b, the central player of the complement amplification loop. As a cofactor of the serine protease factor I, CFH also regulates proteolytic degradation of already-deposited C3b. In addition, mediates several cellular responses through interaction with specific receptors. For example, interacts with CR3/ITGAM receptor and thereby mediates the adhesion of human neutrophils to different pathogens. In turn, these pathogens are phagocytosed and destroyed. Its function is as follows. (Microbial infection) In the mosquito midgut, binds to the surface of parasite P.falciparum gametocytes and protects the parasite from alternative complement pathway-mediated elimination. The polypeptide is Complement factor H (CFH) (Homo sapiens (Human)).